Reading from the N-terminus, the 135-residue chain is Retinol-binding protein 1 (135 aa).

The tract at residues 22 to 32 (RALDVNVALRK) is important for interaction with STRA6. Lys41, Met63, and Gln109 together coordinate all-trans-retinol.

It belongs to the calycin superfamily. Fatty-acid binding protein (FABP) family. In terms of assembly, interacts (only as retinol-free apoprotein) with STRA6.

The protein resides in the cytoplasm. Its subcellular location is the lipid droplet. Cytoplasmic retinol-binding protein. Accepts retinol from the transport protein STRA6, and thereby contributes to retinol uptake, storage and retinoid homeostasis. The chain is Retinol-binding protein 1 (Rbp1) from Rattus norvegicus (Rat).